The chain runs to 1006 residues: MKLYSIDFPLNESNNIFPNSSENININNNNINNSNPNNFINSNTDSELYGNYKPSSSNNFINNHHNNQSSDIHSISQSTPNLSTLISSSSNNNNNNNNNNSPNYSMNSSSDQAPNLLNMDSKLRWNQPFQNQQQQQPTSEVSTNSANTSSENTTCNNSPVSSSTNYIPNNSTSNVVLNSSIPTTSPNVLSAPNKKRQRDDIDCGNNNNINNNNINNNINNNNNNNNNNNNNNNNNNNNNNNGYIDPFYLRDDKDFNNNNNVQLDNTNISQFNDSKELNIKIKKDNNNNNINNINNINNNNNINNNINNNKNLQPQQIQQPQQPQQIQQIQQIQQIQQIQQTQPQQQQQQTQQQPQQQPQQLMSGNLKLPSIHHLEFEVEKNAKKDDSTNTNNNNNNNNNNNNNNNNNNNNIQQANVNTSPISTSTTPNNNNNNQIQNQPQQIPQQQAQQQAQQQAQQKKRKTKPSKYSITPSISLTPTTVTSSSSTNSSGSIGASPLSTSTNIPYSVTNNLSSNNLHSYMNPMGQDYSTSGMLSTTNPYTHHSPNTSSTVSSSVTSPLINQYGTNPTLTNNHSFYGSLASNQNTGASDGNNNNNNNNNNNNGGSGYFQSPVILSPFQKSSNPLNNNHNSNNVYNSSNSHNDINDYISLNSSSNNSYYNSNSGSGMTTPQSLGHSPSHNDYNSNNNNNNNNNNNSNNNNSNNSNSNNLTNKYDSNSSLSLLSSIGDNNNNNNNNNNNNNKSHSSSYYSSMSNNSNPSSSSSSSSSSSSSSSTLSSLNNNNKLSSNNGHIKYEPTSSSNYHDQMSQSHIYQNNFTYYDQSFPHPPVKKTHRRRPANIDKSTLYCHNCGTKNTPEWRRGPSGPATLCNACGLAYAKKQREEETNLHKLLLHSNSYSYHRGNMLESYVTPSLLPLFNTAANVPYLNTPNNASSSSSSSSSSSSSSSSSSSTSSYSSSSYNIPNTNTQYNTTSATSSFKPLTFSSLKTPENTRNTLNTNNNKINYSLNGSI.

Residues 55–70 are compositionally biased toward low complexity; the sequence is SSSNNFINNHHNNQSS. Disordered regions lie at residues 55-116, 128-248, 381-499, 528-638, and 657-800; these read SSSN…APNL, PFQN…DPFY, NAKK…PLST, STSG…SSNS, and YNSN…NYHD. Positions 71-86 are enriched in polar residues; sequence DIHSISQSTPNLSTLI. 2 stretches are compositionally biased toward low complexity: residues 87–110 and 128–158; these read SSSS…NSSS and PFQN…CNNS. The span at 159–168 shows a compositional bias: polar residues; sequence PVSSSTNYIP. Low complexity predominate over residues 169 to 180; it reads NNSTSNVVLNSS. Positions 181 to 190 are enriched in polar residues; the sequence is IPTTSPNVLS. 2 stretches are compositionally biased toward low complexity: residues 205 to 241 and 388 to 410; these read NNNN…NNNN and TNTN…NNNN. Residues 411-426 show a composition bias toward polar residues; the sequence is IQQANVNTSPISTSTT. Composition is skewed to low complexity over residues 427–456 and 468–496; these read PNNN…QQAQ and SITP…GASP. Positions 528–539 are enriched in polar residues; it reads STSGMLSTTNPY. Positions 540–557 are enriched in low complexity; that stretch reads THHSPNTSSTVSSSVTSP. A compositionally biased stretch (polar residues) spans 558–589; the sequence is LINQYGTNPTLTNNHSFYGSLASNQNTGASDG. 2 stretches are compositionally biased toward low complexity: residues 590 to 601 and 619 to 638; these read NNNNNNNNNNNN and SSNP…SSNS. Residues 662–680 show a composition bias toward polar residues; that stretch reads GSGMTTPQSLGHSPSHNDY. Low complexity-rich tracts occupy residues 681 to 706 and 713 to 785; these read NSNN…NSNN and SNSS…SSNN. A GATA-type zinc finger spans residues 842–867; the sequence is CHNCGTKNTPEWRRGPSGPATLCNAC. Residues 925 to 957 are disordered; it reads NNASSSSSSSSSSSSSSSSSSSTSSYSSSSYNI. A compositionally biased stretch (low complexity) spans 928-954; that stretch reads SSSSSSSSSSSSSSSSSSSTSSYSSSS.

The protein is GATA zinc finger domain-containing protein 7 (gtaG) of Dictyostelium discoideum (Social amoeba).